Here is a 184-residue protein sequence, read N- to C-terminus: ATP synthase subunit b, chloroplastic (184 aa).

A helical transmembrane segment spans residues 27-49 (LATNPINLSVVLGVLIFFGKGVL).

It belongs to the ATPase B chain family. In terms of assembly, F-type ATPases have 2 components, F(1) - the catalytic core - and F(0) - the membrane proton channel. F(1) has five subunits: alpha(3), beta(3), gamma(1), delta(1), epsilon(1). F(0) has four main subunits: a(1), b(1), b'(1) and c(10-14). The alpha and beta chains form an alternating ring which encloses part of the gamma chain. F(1) is attached to F(0) by a central stalk formed by the gamma and epsilon chains, while a peripheral stalk is formed by the delta, b and b' chains.

Its subcellular location is the plastid. It is found in the chloroplast thylakoid membrane. Its function is as follows. F(1)F(0) ATP synthase produces ATP from ADP in the presence of a proton or sodium gradient. F-type ATPases consist of two structural domains, F(1) containing the extramembraneous catalytic core and F(0) containing the membrane proton channel, linked together by a central stalk and a peripheral stalk. During catalysis, ATP synthesis in the catalytic domain of F(1) is coupled via a rotary mechanism of the central stalk subunits to proton translocation. Functionally, component of the F(0) channel, it forms part of the peripheral stalk, linking F(1) to F(0). The protein is ATP synthase subunit b, chloroplastic of Piper cenocladum (Ant piper).